The sequence spans 61 residues: MALKITQIKGTVGTKPKHRENLRSLGLKRIRHTVIRPDTPEVRGMILAVRHLIVVEEVAGE.

Belongs to the universal ribosomal protein uL30 family. In terms of assembly, part of the 50S ribosomal subunit.

The sequence is that of Large ribosomal subunit protein uL30 from Corynebacterium glutamicum (strain ATCC 13032 / DSM 20300 / JCM 1318 / BCRC 11384 / CCUG 27702 / LMG 3730 / NBRC 12168 / NCIMB 10025 / NRRL B-2784 / 534).